A 310-amino-acid chain; its full sequence is Transaldolase (310 aa).

Lys124 (schiff-base intermediate with substrate) is an active-site residue.

The protein belongs to the transaldolase family. Type 1 subfamily. In terms of assembly, homodimer.

Its subcellular location is the cytoplasm. The enzyme catalyses D-sedoheptulose 7-phosphate + D-glyceraldehyde 3-phosphate = D-erythrose 4-phosphate + beta-D-fructose 6-phosphate. It functions in the pathway carbohydrate degradation; pentose phosphate pathway; D-glyceraldehyde 3-phosphate and beta-D-fructose 6-phosphate from D-ribose 5-phosphate and D-xylulose 5-phosphate (non-oxidative stage): step 2/3. Its function is as follows. Transaldolase is important for the balance of metabolites in the pentose-phosphate pathway. In Teredinibacter turnerae (strain ATCC 39867 / T7901), this protein is Transaldolase.